Reading from the N-terminus, the 239-residue chain is Endonuclease V (239 aa).

Mg(2+) is bound by residues Asp50 and Asp118.

Belongs to the endonuclease V family. Mg(2+) serves as cofactor.

The protein localises to the cytoplasm. The enzyme catalyses Endonucleolytic cleavage at apurinic or apyrimidinic sites to products with a 5'-phosphate.. In terms of biological role, DNA repair enzyme involved in the repair of deaminated bases. Selectively cleaves double-stranded DNA at the second phosphodiester bond 3' to a deoxyinosine leaving behind the intact lesion on the nicked DNA. This is Endonuclease V from Xylella fastidiosa (strain Temecula1 / ATCC 700964).